The primary structure comprises 201 residues: Dephospho-CoA kinase (201 aa).

Residues 4-201 (IIGITGGIAS…LEGGRQDDRD (198 aa)) form the DPCK domain. Residue 12-17 (ASGKST) coordinates ATP.

This sequence belongs to the CoaE family.

Its subcellular location is the cytoplasm. It carries out the reaction 3'-dephospho-CoA + ATP = ADP + CoA + H(+). It functions in the pathway cofactor biosynthesis; coenzyme A biosynthesis; CoA from (R)-pantothenate: step 5/5. In terms of biological role, catalyzes the phosphorylation of the 3'-hydroxyl group of dephosphocoenzyme A to form coenzyme A. In Streptococcus pneumoniae serotype 4 (strain ATCC BAA-334 / TIGR4), this protein is Dephospho-CoA kinase.